The primary structure comprises 459 residues: Periodic tryptophan protein 1 homolog (459 aa).

The interval 44–84 (GDTQQELDEESDDDAEEGENAEEDQNDMDVDDHADANSENR) is disordered. A compositionally biased stretch (acidic residues) spans 48 to 73 (QELDEESDDDAEEGENAEEDQNDMDV). The span at 74–84 (DDHADANSENR) shows a compositional bias: basic and acidic residues. 5 WD repeats span residues 168 to 214 (LLPS…AIEP), 232 to 272 (GHKD…PHTT), 275 to 315 (AFGK…GVNS), 321 to 361 (KVDG…QLLW), and 365 to 405 (AHNE…AKHV). Position 385 is a phosphoserine (S385).

It belongs to the WD repeat PWP1 family. Interacts with Mybbp1A. In terms of processing, phosphorylated in response to nutrient-activated TORC1 signaling. In terms of tissue distribution, detected in the germline of adult testis and ovary (at protein level). Detected in ovary somatic cells, in zfh1-positive cyst cells in the testis and absent in differentiated cyst cells (at protein level).

It localises to the nucleus. It is found in the nucleolus. The protein localises to the chromosome. The protein resides in the nucleoplasm. Functionally, chromatin-associated factor that regulates transcription. Regulates Pol I-mediated rRNA biogenesis and, probably, Pol III-mediated transcription. Regulates the localization to the nucleolus of Cdk7, a regulator of the Pol I-elongation factor TFIIH. Acts as a regulator of cell proliferation and tissue growth as part of the TORC1 and Myc signaling pathway in response to nutrients. Required in males for both germline stem cell (GSC) maintenance and early stages of germ cell differentiation of germ cell cysts. Not required for female germline stem cell (GSC) maintenance, but necessary to regulate germ cell differentiation and egg chamber development. In female somatic cells, required for follicle stem cell survival and maintenance. The protein is Periodic tryptophan protein 1 homolog of Drosophila melanogaster (Fruit fly).